A 118-amino-acid chain; its full sequence is Probable small nuclear ribonucleoprotein Sm D2 (118 aa).

The 87-residue stretch at 29-115 (LSILTNSVKN…VILVVKNPLA (87 aa)) folds into the Sm domain.

The protein belongs to the snRNP core protein family.

The protein resides in the nucleus. It is found in the cytoplasm. It localises to the cytosol. Functionally, plays a role in pre-mRNA splicing as a core component of the spliceosomal U1, U2, U4 and U5 small nuclear ribonucleoproteins (snRNPs), the building blocks of the spliceosome. This is Probable small nuclear ribonucleoprotein Sm D2 (snr-4) from Caenorhabditis elegans.